The sequence spans 122 residues: Large ribosomal subunit protein uL14c (122 aa).

Belongs to the universal ribosomal protein uL14 family. As to quaternary structure, part of the 50S ribosomal subunit.

It localises to the plastid. The protein resides in the chloroplast. Binds to 23S rRNA. The chain is Large ribosomal subunit protein uL14c from Ipomoea purpurea (Common morning glory).